Here is a 306-residue protein sequence, read N- to C-terminus: UDP-3-O-acyl-N-acetylglucosamine deacetylase (306 aa).

Residues His79, His238, and Asp242 each coordinate Zn(2+). His265 (proton donor) is an active-site residue.

The protein belongs to the LpxC family. Requires Zn(2+) as cofactor.

It catalyses the reaction a UDP-3-O-[(3R)-3-hydroxyacyl]-N-acetyl-alpha-D-glucosamine + H2O = a UDP-3-O-[(3R)-3-hydroxyacyl]-alpha-D-glucosamine + acetate. It participates in glycolipid biosynthesis; lipid IV(A) biosynthesis; lipid IV(A) from (3R)-3-hydroxytetradecanoyl-[acyl-carrier-protein] and UDP-N-acetyl-alpha-D-glucosamine: step 2/6. Its function is as follows. Catalyzes the hydrolysis of UDP-3-O-myristoyl-N-acetylglucosamine to form UDP-3-O-myristoylglucosamine and acetate, the committed step in lipid A biosynthesis. This is UDP-3-O-acyl-N-acetylglucosamine deacetylase from Shewanella halifaxensis (strain HAW-EB4).